A 189-amino-acid polypeptide reads, in one-letter code: Lipid A acyltransferase PagP (189 aa).

A signal peptide spans 1 to 24 (MLRRFSLFSLGFLGWLLVSGNASA). Active-site residues include histidine 61, aspartate 104, and serine 105.

The protein belongs to the lipid A palmitoyltransferase family. In terms of assembly, homodimer.

The protein resides in the cell outer membrane. It carries out the reaction a lipid A + a 1,2-diacyl-sn-glycero-3-phosphocholine = a hepta-acyl lipid A + a 2-acyl-sn-glycero-3-phosphocholine. The catalysed reaction is a lipid IVA + a 1,2-diacyl-sn-glycero-3-phosphocholine = a lipid IVB + a 2-acyl-sn-glycero-3-phosphocholine. The enzyme catalyses a lipid IIA + a 1,2-diacyl-sn-glycero-3-phosphocholine = a lipid IIB + a 2-acyl-sn-glycero-3-phosphocholine. Its function is as follows. Transfers a fatty acid residue from the sn-1 position of a phospholipid to the N-linked hydroxyfatty acid chain on the proximal unit of lipid A or its precursors. The protein is Lipid A acyltransferase PagP of Klebsiella pneumoniae subsp. pneumoniae (strain ATCC 700721 / MGH 78578).